Consider the following 325-residue polypeptide: dITP/XTP pyrophosphatase (325 aa).

The tract at residues 1–128 (MKEKIYEYKD…KKVSELGDTI (128 aa)) is unknown. Residues 129–324 (LIATRNEGKT…MEVFPAWQNA (196 aa)) form an NTP pyrophosphatase region. Residue 132-137 (TRNEGK) coordinates substrate. E165 and D194 together coordinate Mg(2+). D194 serves as the catalytic Proton acceptor. Residues S195, 278-281 (FGYD), K301, and 306-307 (HR) each bind substrate.

The protein belongs to the HAM1 NTPase family. As to quaternary structure, homodimer. Requires Mg(2+) as cofactor.

The enzyme catalyses XTP + H2O = XMP + diphosphate + H(+). It catalyses the reaction dITP + H2O = dIMP + diphosphate + H(+). It carries out the reaction ITP + H2O = IMP + diphosphate + H(+). Its function is as follows. Pyrophosphatase that catalyzes the hydrolysis of nucleoside triphosphates to their monophosphate derivatives, with a high preference for the non-canonical purine nucleotides XTP (xanthosine triphosphate), dITP (deoxyinosine triphosphate) and ITP. Seems to function as a house-cleaning enzyme that removes non-canonical purine nucleotides from the nucleotide pool, thus preventing their incorporation into DNA/RNA and avoiding chromosomal lesions. The sequence is that of dITP/XTP pyrophosphatase from Streptococcus mutans serotype c (strain ATCC 700610 / UA159).